Reading from the N-terminus, the 467-residue chain is Glutamate--tRNA ligase (467 aa).

Positions 10–20 (PSPTGYLHVGG) match the 'HIGH' region motif. Residues 238–242 (RLSKR) carry the 'KMSKS' region motif. K241 provides a ligand contact to ATP.

The protein belongs to the class-I aminoacyl-tRNA synthetase family. Glutamate--tRNA ligase type 1 subfamily. In terms of assembly, monomer.

It localises to the cytoplasm. It carries out the reaction tRNA(Glu) + L-glutamate + ATP = L-glutamyl-tRNA(Glu) + AMP + diphosphate. Catalyzes the attachment of glutamate to tRNA(Glu) in a two-step reaction: glutamate is first activated by ATP to form Glu-AMP and then transferred to the acceptor end of tRNA(Glu). This is Glutamate--tRNA ligase from Citrifermentans bemidjiense (strain ATCC BAA-1014 / DSM 16622 / JCM 12645 / Bem) (Geobacter bemidjiensis).